The following is a 232-amino-acid chain: Ras-related protein RabP (232 aa).

15 to 22 lines the GTP pocket; sequence GNYGVGKS. The short motif at 35 to 40 is the Effector region element; that stretch reads DNTTGF. Residues 58–62 and 118–121 each bind GTP; these read DTSGQ and NKFD. S-geranylgeranyl cysteine attachment occurs at residues cysteine 229 and cysteine 230.

Belongs to the small GTPase superfamily. Rab family.

The protein localises to the cell membrane. The protein is Ras-related protein RabP (rabP) of Dictyostelium discoideum (Social amoeba).